The primary structure comprises 118 residues: Non-specific lipid-transfer protein 3 (118 aa).

A signal peptide spans 1 to 25 (MARAAATQLVLVAMVAAMLLVATDA). Cystine bridges form between C29–C77, C39–C54, C55–C100, and C75–C114.

The protein belongs to the plant LTP family.

Functionally, plant non-specific lipid-transfer proteins transfer phospholipids as well as galactolipids across membranes. May play a role in wax or cutin deposition in the cell walls of expanding epidermal cells and certain secretory tissues. The protein is Non-specific lipid-transfer protein 3 (LTP3) of Hordeum vulgare (Barley).